The chain runs to 414 residues: Esterase FrsA (414 aa).

This sequence belongs to the FrsA family.

The enzyme catalyses a carboxylic ester + H2O = an alcohol + a carboxylate + H(+). Its function is as follows. Catalyzes the hydrolysis of esters. The polypeptide is Esterase FrsA (Escherichia fergusonii (strain ATCC 35469 / DSM 13698 / CCUG 18766 / IAM 14443 / JCM 21226 / LMG 7866 / NBRC 102419 / NCTC 12128 / CDC 0568-73)).